The following is an 820-amino-acid chain: Leucine--tRNA ligase (820 aa).

The short motif at 40–51 (PYPSGAGLHVGH) is the 'HIGH' region element. The short motif at 601-605 (KMSKS) is the 'KMSKS' region element. An ATP-binding site is contributed by Lys604.

This sequence belongs to the class-I aminoacyl-tRNA synthetase family.

It is found in the cytoplasm. It carries out the reaction tRNA(Leu) + L-leucine + ATP = L-leucyl-tRNA(Leu) + AMP + diphosphate. The chain is Leucine--tRNA ligase from Chlamydia abortus (strain DSM 27085 / S26/3) (Chlamydophila abortus).